Reading from the N-terminus, the 672-residue chain is DNA ligase (672 aa).

NAD(+) is bound by residues 30-34, 79-80, and glutamate 110; these read DAVYD and SL. The active-site N6-AMP-lysine intermediate is the lysine 112. 4 residues coordinate NAD(+): arginine 133, glutamate 170, lysine 287, and lysine 311. Cysteine 405, cysteine 408, cysteine 423, and cysteine 429 together coordinate Zn(2+). The 83-residue stretch at 590-672 folds into the BRCT domain; sequence ADELPLSGKT…IALLTEHGAI (83 aa).

It belongs to the NAD-dependent DNA ligase family. LigA subfamily. The cofactor is Mg(2+). Mn(2+) is required as a cofactor.

It catalyses the reaction NAD(+) + (deoxyribonucleotide)n-3'-hydroxyl + 5'-phospho-(deoxyribonucleotide)m = (deoxyribonucleotide)n+m + AMP + beta-nicotinamide D-nucleotide.. Functionally, DNA ligase that catalyzes the formation of phosphodiester linkages between 5'-phosphoryl and 3'-hydroxyl groups in double-stranded DNA using NAD as a coenzyme and as the energy source for the reaction. It is essential for DNA replication and repair of damaged DNA. This chain is DNA ligase, found in Marinomonas sp. (strain MWYL1).